Consider the following 654-residue polypeptide: Carboxypeptidase Z (654 aa).

An N-terminal signal peptide occupies residues 1–20; that stretch reads MPTMPLLLAALAALAVLALA. Positions 43–165 constitute an FZ domain; that stretch reads THSATCVDLH…APEEEGCYDP (123 aa). Intrachain disulfides connect C48–C114, C56–C107, C98–C134, C123–C162, and C127–C151. N-linked (GlcNAc...) asparagine glycosylation occurs at N62. The 317-residue stretch at 191 to 507 folds into the Peptidase M14 domain; the sequence is AHHSYAQMVR…EPLLNFLEMV (317 aa). H253 and E256 together coordinate Zn(2+). N286 carries an N-linked (GlcNAc...) asparagine glycan. Residue H385 coordinates Zn(2+). E477 functions as the Proton donor/acceptor in the catalytic mechanism. The disordered stretch occupies residues 596–630; that stretch reads FLPGPSRALPRFQDPQREPTQMDFEPPRARRQPAS.

It belongs to the peptidase M14 family. Requires Zn(2+) as cofactor.

The protein localises to the secreted. The protein resides in the extracellular space. Its subcellular location is the extracellular matrix. Inhibited by 2-mercaptomethyl-3-guanidinoethylthiopropanoic acid (MGTA) and guanidinoethylmercaptosuccinic acid (GEMSA). Inhibited by chelating agents such as EDTA and EGTA. Its function is as follows. Cleaves substrates with C-terminal arginine residues. Probably modulates the Wnt signaling pathway, by cleaving some undefined protein. May play a role in cleavage during prohormone processing. This is Carboxypeptidase Z (Cpz) from Mus musculus (Mouse).